Consider the following 816-residue polypeptide: Mitogen-activated protein kinase 7 (816 aa).

A disordered region spans residues 1 to 26; it reads MAEPLKEEDGEDGSAEPPGPVKAEPA. Position 2 is an N-acetylalanine (alanine 2). The interval 2 to 77 is required for cytoplasmic targeting; sequence AEPLKEEDGE…VVSSARRRLT (76 aa). Positions 55-347 constitute a Protein kinase domain; that stretch reads YEIIETIGNG…AAAALRHPFL (293 aa). Residues 61–69 and lysine 84 each bind ATP; that span reads IGNGAYGVV. The segment at 78 to 139 is required for binding to MAP2K5; that stretch reads GQQVAIKKIP…FKSVYVVLDL (62 aa). Residues 140-406 form a necessary for oligomerization region; that stretch reads MESDLHQIIH…QQIRFQPSLQ (267 aa). Aspartate 182 acts as the Proton acceptor in catalysis. Residues 219–221 carry the TXY motif; the sequence is TEY. The tract at residues 406–737 is disordered; the sequence is QPVASEPGCP…PVFSGTPKGS (332 aa). The segment at 407-806 is may not be required for kinase activity; required to stimulate MEF2C activity; sequence PVASEPGCPD…REIQMDSPML (400 aa). Pro residues-rich tracts occupy residues 433-445 and 454-463; these read SPPP…PGPA and QPPPPVSEPA. The segment covering 476-486 has biased composition (low complexity); sequence KAALKAALLKS. Basic and acidic residues-rich tracts occupy residues 502–519, 527–544, and 563–573; these read PEPR…EREE, RAKE…KERG, and DNDRSLLERWT. The Nuclear localization signal signature appears at 505-539; it reads RKPVTAQERQREREEKRRRRQERAKEREKRRQERE. Low complexity predominate over residues 578 to 587; the sequence is PAAPALTSVP. Pro residues-rich tracts occupy residues 588-610 and 628-655; these read APAP…PGPV and VPQP…PAPP. Residues 676 to 685 are compositionally biased toward low complexity; it reads PGSSTPGVLP. A compositionally biased stretch (pro residues) spans 686–695; it reads YFPPGLPPPD. Residues 701 to 720 are compositionally biased toward polar residues; sequence QSSMSESPDVNLVTQQLSKS. Serine 720 is modified (phosphoserine). Position 733 is a phosphothreonine (threonine 733).

It belongs to the protein kinase superfamily. CMGC Ser/Thr protein kinase family. MAP kinase subfamily. In terms of assembly, interacts with MAP2K5. Forms oligomers. Interacts with MEF2A, MEF2C and MEF2D; the interaction phosphorylates the MEF2s and enhances transcriptional activity of MEF2A, MEF2C but not MEF2D. Interacts with SGK1. Preferentially interacts with PML isoform PML-4 but shows interaction also with its other isoforms: isoform PML-1, isoform PML-2, isoform PML-3 and isoform PML-6. Interacts (via N-terminal half) with HSP90AB1-CDC37 chaperone complex in resting cells; the interaction is MAP2K5-independent and prevents MAPK7 from ubiquitination and proteasomal degradation. Interacts with STUB1/CHIP; the interaction is enhanced in the presence of IGF1 or MAP2K5 and promotes STUB1/CHIP E3 ligase activity. It depends on Mg(2+) as a cofactor. Dually phosphorylated on Thr-219 and Tyr-221, which activates the enzyme. Autophosphorylated in vitro on threonine and tyrosine residues when the C-terminal part of the kinase, which could have a regulatory role, is absent. As to expression, expressed in many adult tissues. Abundant in heart, placenta, lung, kidney and skeletal muscle. Not detectable in liver.

It localises to the cytoplasm. Its subcellular location is the nucleus. The protein localises to the PML body. The enzyme catalyses L-seryl-[protein] + ATP = O-phospho-L-seryl-[protein] + ADP + H(+). The catalysed reaction is L-threonyl-[protein] + ATP = O-phospho-L-threonyl-[protein] + ADP + H(+). Activated by tyrosine and threonine phosphorylation. Activated in response to hyperosmolarity, hydrogen peroxide, and epidermal growth factor (EGF). Functionally, plays a role in various cellular processes such as proliferation, differentiation and cell survival. The upstream activator of MAPK7 is the MAPK kinase MAP2K5. Upon activation, it translocates to the nucleus and phosphorylates various downstream targets including MEF2C. EGF activates MAPK7 through a Ras-independent and MAP2K5-dependent pathway. As part of the MAPK/ERK signaling pathway, acts as a negative regulator of apoptosis in cardiomyocytes via interaction with STUB1/CHIP and promotion of STUB1-mediated ubiquitination and degradation of ICER-type isoforms of CREM. May have a role in muscle cell differentiation. May be important for endothelial function and maintenance of blood vessel integrity. MAP2K5 and MAPK7 interact specifically with one another and not with MEK1/ERK1 or MEK2/ERK2 pathways. Phosphorylates SGK1 at Ser-78 and this is required for growth factor-induced cell cycle progression. Involved in the regulation of p53/TP53 by disrupting the PML-MDM2 interaction. In Homo sapiens (Human), this protein is Mitogen-activated protein kinase 7 (MAPK7).